Here is a 288-residue protein sequence, read N- to C-terminus: Inorganic pyrophosphatase (288 aa).

A diphosphate-binding site is contributed by arginine 80. Residues aspartate 117, aspartate 122, and aspartate 154 each coordinate Mg(2+). Residues 252 to 271 (TPSYSDAAAQEIPSASPAPA) form a disordered region. Low complexity predominate over residues 258 to 271 (AAAQEIPSASPAPA).

The protein belongs to the PPase family. It depends on Mg(2+) as a cofactor.

It localises to the cytoplasm. The catalysed reaction is diphosphate + H2O = 2 phosphate + H(+). The polypeptide is Inorganic pyrophosphatase (IPP1) (Candida albicans (strain SC5314 / ATCC MYA-2876) (Yeast)).